A 216-amino-acid polypeptide reads, in one-letter code: Eukaryotic translation initiation factor isoform 4E-2 (216 aa).

Positions 1-23 (MAEVEAPATAVEAPAAAVATTTP) are disordered. Cys113 and Cys152 are joined by a disulfide.

It belongs to the eukaryotic initiation factor 4E family. In terms of assembly, EIF4F is a multi-subunit complex, the composition of which varies with external and internal environmental conditions. It is composed of at least EIF4A, EIF4E and EIF4G. EIF4E is also known to interact with other partners. In higher plants two isoforms of EIF4F have been identified, named isoform EIF4F and isoform EIF(iso)4F. Isoform EIF4F has subunits p220 and p26, whereas isoform EIF(iso)4F has subunits p82 and p28. According to the redox status, the Cys-113-Cys-152 disulfide bridge may have a role in regulating protein function by affecting its ability to bind capped mRNA.

Its function is as follows. Recognizes and binds the 7-methylguanosine-containing mRNA cap during an early step in the initiation of protein synthesis and facilitates ribosome binding by inducing the unwinding of the mRNAs secondary structures. This is Eukaryotic translation initiation factor isoform 4E-2 from Zea mays (Maize).